The primary structure comprises 658 residues: Glycogen debranching enzyme (658 aa).

Asp-336 acts as the Nucleophile in catalysis. The Proton donor role is filled by Glu-371. The tract at residues 459-484 (EANGEENRDGTNSNYSDNHGKEGLGG) is disordered.

The protein belongs to the glycosyl hydrolase 13 family.

The catalysed reaction is Hydrolysis of (1-&gt;6)-alpha-D-glucosidic linkages to branches with degrees of polymerization of three or four glucose residues in limit dextrin.. The protein operates within glycan degradation; glycogen degradation. Functionally, removes maltotriose and maltotetraose chains that are attached by 1,6-alpha-linkage to the limit dextrin main chain, generating a debranched limit dextrin. This Salmonella dublin (strain CT_02021853) protein is Glycogen debranching enzyme.